Here is a 375-residue protein sequence, read N- to C-terminus: Adiponectin receptor protein 1 (375 aa).

Residues 1 to 60 (MSSHKGSVVAQGNGAPASNREADTVELAELGPLLEEKGKRVIANPPKAEEEQTCPVPQEE) are disordered. Over 1–136 (MSSHKGSVVA…SIFRIHTETG (136 aa)) the chain is Cytoplasmic. The chain crosses the membrane as a helical span at residues 137–157 (NIWTHLLGFVLFLFLGILTML). The Extracellular segment spans residues 158–170 (RPNMYFMAPLQEK). The chain crosses the membrane as a helical span at residues 171 to 191 (VVFGMFFLGAVLCLSFSWLFH). His-191 provides a ligand contact to Zn(2+). Residues 192–203 (TVYCHSEKVSRT) are Cytoplasmic-facing. A helical membrane pass occupies residues 204–224 (FSKLDYSGIALLIMGSFVPWL). Topologically, residues 225 to 234 (YYSFYCSPQP) are extracellular. A helical transmembrane segment spans residues 235-255 (RLIYLSIVCVLGISAIIVAQW). The Cytoplasmic segment spans residues 256–264 (DRFATPKHR). Residues 265-285 (QTRAGVFLGLGLSGVVPTMHF) form a helical membrane-spanning segment. Residues 286–298 (TIAEGFVKATTVG) lie on the Extracellular side of the membrane. A helical membrane pass occupies residues 299–319 (QMGWFFLMAVMYITGAGLYAA). The Cytoplasmic portion of the chain corresponds to 320–337 (RIPERFFPGKFDIWFQSH). Residues His-337 and His-341 each contribute to the Zn(2+) site. A helical transmembrane segment spans residues 338–358 (QIFHVLVVAAAFVHFYGVSNL). The Extracellular portion of the chain corresponds to 359-375 (QEFRYGLEGGCTDDTLL).

It belongs to the ADIPOR family. May form homooligomers and heterooligomers with ADIPOR2. Interacts with APPL2 (via BAR domain); hinders the accessibility of APPL1 to ADIPOR1; negatively regulates adiponectin signaling; ADIPOQ dissociates this interaction and facilitates the recruitment of APPL1 to ADIPOR1. Interacts with APPL1; ADIPOQ enhances this interaction; inhibites adiponectin-stimulated binding of APPL2 to ADIPOR1. As to expression, widely expressed. Highly expressed in heart and skeletal muscle. Expressed at intermediate level in brain, spleen, kidney, liver, placenta, lung and peripheral blood leukocytes. Weakly expressed in colon, thymus and small intestine.

The protein localises to the cell membrane. Receptor for ADIPOQ, an essential hormone secreted by adipocytes that regulates glucose and lipid metabolism. Required for normal glucose and fat homeostasis and for maintaining a normal body weight. ADIPOQ-binding activates a signaling cascade that leads to increased AMPK activity, and ultimately to increased fatty acid oxidation, increased glucose uptake and decreased gluconeogenesis. Has high affinity for globular adiponectin and low affinity for full-length adiponectin. In Homo sapiens (Human), this protein is Adiponectin receptor protein 1.